The following is a 175-amino-acid chain: MKRDRSDYEESMKHIDIVESLMMLSRSFVVKQIDVKQSTGSKTNHNNHFECKTCNRKFDSFQALGGHRASHKKPKLIVDQEQVKHRNKENDMHKCTICDQMFGTGQALGGHMRKHRTSMITEQSIVPSVVYSRPVFNRCSSSKEILDLNLTPLENDLVLIFGKNLVPQIDLKFVN.

2 C2H2-type zinc fingers span residues 49–71 and 93–115; these read FECKTCNRKFDSFQALGGHRASH and HKCTICDQMFGTGQALGGHMRKH. A Nuclear localization signal motif is present at residues 71 to 78; that stretch reads HKKPKLIV. The EAR-like (transcriptional repression) motif lies at 146-152; sequence LDLNLTP.

In terms of tissue distribution, mostly expressed in stems, siliques and leaves, and, to a lower extent, in cotyledons, hypocotyls and roots.

The protein localises to the nucleus. Functionally, transcription factor involved in stress responses. Positive regulator of the jasmonic acid (JA)- mediated signaling pathway. Triggers the up-regulation of LOX3, VSP2, PAL1 and PAL2 in a JA-dependent manner. Promotes drought and osmotic stress tolerance by preventing reactive oxygen species (ROS) production (e.g. H(2)O(2)). The sequence is that of Zinc finger protein ZAT18 from Arabidopsis thaliana (Mouse-ear cress).